The primary structure comprises 303 residues: MMKMNTGTSPSVIGGGTSGNEWESRPGGMVVQRRTDQNSDVPRVFRVRVKYGSVYHEININSQSSFGELKKMLSDQVGLHHEDMKVLYKDKERDSKMFLDLCGVKDRSKLVVKEDPISQEKRLLAKRKNAAIEKASKSISDISFEVDRLAGQVSAFETVINKGGKVEEKSLVNLIEMLMNQLLRLDAIIADGDVKLMRKMQVQRVQKYVEALDLLKVKNSAKKVEVNKSVRHKPQTQTRFEQRDLLSFVEEEEEEPRNSNASSSSGTPAVVASKWEMFDSASTAKAAETVKPVPPRFKWEFFD.

Polar residues predominate over residues 1–11 (MMKMNTGTSPS). A disordered region spans residues 1–27 (MMKMNTGTSPSVIGGGTSGNEWESRPG). In terms of domain architecture, Ubiquitin-like spans 45–119 (FRVRVKYGSV…LVVKEDPISQ (75 aa)). Residues 138–216 (SISDISFEVD…KYVEALDLLK (79 aa)) form the BAG domain. The interval 249-268 (VEEEEEEPRNSNASSSSGTP) is disordered. Positions 258-267 (NSNASSSSGT) are enriched in polar residues. Position 263 is a phosphoserine (serine 263).

As to quaternary structure, binds to the ATPase domain of HSP70/HSC70 chaperones. Interacts with HSP70-1.

Functionally, co-chaperone that regulates diverse cellular pathways, such as programmed cell death and stress responses. The polypeptide is BAG family molecular chaperone regulator 3 (BAG3) (Arabidopsis thaliana (Mouse-ear cress)).